The chain runs to 481 residues: Protein hedgehog (481 aa).

C93 carries N-palmitoyl cysteine lipidation. Ca(2+)-binding residues include E157, E158, D163, T193, E194, D197, and D199. Residue G265 is the site of Cholesterol glycine ester attachment.

The protein belongs to the hedgehog family. Interacts with shf. The C-terminal part of the hedgehog protein precursor displays an autoproteolysis activity that results in the cleavage of the full-length protein into two parts (N-product and C-product). In addition, the C-terminal part displays a cholesterol transferase activity that results by the covalent attachment of a cholesterol moiety to the C-terminal of the newly generated N-product. The N-product is the active species in both local and long-range signaling, whereas the C-product has no signaling activity. In terms of processing, cholesterylation is required for N-product targeting to lipid rafts and multimerization. Post-translationally, N-palmitoylation by Rasp of the hedgehog N-product, within the secretory pathway, is required for the embryonic and larval patterning activities of the hedgehog signal.

It localises to the nucleus. It is found in the cytoplasm. The protein resides in the cell membrane. The catalysed reaction is glycyl-L-cysteinyl-[protein] + cholesterol + H(+) = [protein]-C-terminal glycyl cholesterol ester + N-terminal L-cysteinyl-[protein]. Functionally, the C-terminal part of the hedgehog protein precursor displays an autoproteolysis activity that results in the cleavage of the full-length protein into two parts (N-product and C-product). In addition, the C-terminal part displays a cholesterol transferase activity that results by the covalent attachment of a cholesterol moiety to the C-terminal of the newly generated N-product. Once cleaved, the C-product has no signaling activity and diffuses from the cell. Its function is as follows. The dually lipidated hedgehog protein N-product is a morphogen which is essential for a variety of patterning events during development. Establishes the anterior-posterior axis of the embryonic segments and patterns the larval imaginal disks. Binds to the patched (ptc) receptor, which functions in association with smoothened (smo), to activate the transcription of target genes wingless (wg), decapentaplegic (dpp) and ptc. In the absence of hh, ptc represses the constitutive signaling activity of smo through fused (fu). Essential component of a signaling pathway which regulates the Duox-dependent gut immune response to bacterial uracil; required to activate Cad99C-dependent endosome formation, norpA-dependent Ca2+ mobilization and p38 MAPK, which are essential steps in the Duox-dependent production of reactive oxygen species (ROS) in response to intestinal bacterial infection. During photoreceptor differentiation, it up-regulates transcription of Ubr3, which in turn promotes the hh-signaling pathway by mediating the ubiquitination and degradation of cos. The polypeptide is Protein hedgehog (Drosophila persimilis (Fruit fly)).